The sequence spans 172 residues: Female-specific lacrimal gland protein (172 aa).

The N-terminal stretch at 1–16 is a signal peptide; it reads MVKFLLLALALGVSCA. Disulfide bonds link C60–C64 and C79–C170.

This sequence belongs to the calycin superfamily. Lipocalin family. Expressed in the lacrimal gland from where it is secreted into tears (at protein level).

It localises to the secreted. This chain is Female-specific lacrimal gland protein, found in Mesocricetus auratus (Golden hamster).